The primary structure comprises 88 residues: Large ribosomal subunit protein bL27 (88 aa).

Belongs to the bacterial ribosomal protein bL27 family.

The polypeptide is Large ribosomal subunit protein bL27 (Mycolicibacterium vanbaalenii (strain DSM 7251 / JCM 13017 / BCRC 16820 / KCTC 9966 / NRRL B-24157 / PYR-1) (Mycobacterium vanbaalenii)).